We begin with the raw amino-acid sequence, 70 residues long: Mu-agatoxin-Ao1a (70 aa).

The signal sequence occupies residues 1-20; the sequence is MKAIIFFCFLSVMVFIVAEA. Residues 21-33 constitute a propeptide that is removed on maturation; sequence SSLEALKIFEGER. 4 cysteine pairs are disulfide-bonded: cysteine 35–cysteine 50, cysteine 42–cysteine 55, cysteine 49–cysteine 65, and cysteine 57–cysteine 63. The residue at position 69 (asparagine 69) is an Asparagine amide.

The protein belongs to the neurotoxin 07 (Beta/delta-agtx) family. 04 (aga-5) subfamily. Expressed by the venom gland.

It is found in the secreted. In terms of biological role, insecticidal neurotoxin that modulates the insect Nav channel (DmNaV1/tipE (para/tipE)) in a unique manner, with both the activation and inactivation processes being affected. The voltage dependence of activation is shifted toward more hyperpolarized potentials (analogous to site 4 toxins) and a non-inactivating persistent sodium current is induced (site 3-like action). Interestingly, both effects take place in a voltage-dependent manner, producing a bell-shaped curve between -80 and 0 mV. The chain is Mu-agatoxin-Ao1a from Agelena orientalis (Funnel-web spider).